A 107-amino-acid chain; its full sequence is Large ribosomal subunit protein P1 (107 aa).

The interval 67–107 (GAAPAAAAPAAGGAPAAGAAPKKEEKKEPSEEEDMGFSLFD) is disordered. Residues 69-86 (APAAAAPAAGGAPAAGAA) show a composition bias toward low complexity.

This sequence belongs to the eukaryotic ribosomal protein P1/P2 family. In terms of assembly, P1 and P2 exist as dimers at the large ribosomal subunit.

Its function is as follows. Plays an important role in the elongation step of protein synthesis. The polypeptide is Large ribosomal subunit protein P1 (Chlamydomonas reinhardtii (Chlamydomonas smithii)).